A 124-amino-acid chain; its full sequence is MARVAGIDLPKNKRIDVALEYIYGIGKRNAKDVIAKANGQIDPTTRVKDLTEAQANLLNTILQKEYKVEGELRREISGNIQRYVDTGSYRGNRHRKRLPVRGQRTKTNSRTRKGKRRTVGSKTK.

The disordered stretch occupies residues 87–124 (GSYRGNRHRKRLPVRGQRTKTNSRTRKGKRRTVGSKTK). A compositionally biased stretch (basic residues) spans 91-124 (GNRHRKRLPVRGQRTKTNSRTRKGKRRTVGSKTK).

The protein belongs to the universal ribosomal protein uS13 family. Part of the 30S ribosomal subunit. Forms a loose heterodimer with protein S19. Forms two bridges to the 50S subunit in the 70S ribosome.

Located at the top of the head of the 30S subunit, it contacts several helices of the 16S rRNA. In the 70S ribosome it contacts the 23S rRNA (bridge B1a) and protein L5 of the 50S subunit (bridge B1b), connecting the 2 subunits; these bridges are implicated in subunit movement. Contacts the tRNAs in the A and P-sites. This is Small ribosomal subunit protein uS13 from Elusimicrobium minutum (strain Pei191).